A 242-amino-acid polypeptide reads, in one-letter code: Uridylate kinase (242 aa).

Residue 16-19 participates in ATP binding; the sequence is KVSG. Glycine 58 serves as a coordination point for UMP. Positions 59 and 63 each coordinate ATP. Residues aspartate 78 and 139–146 contribute to the UMP site; that span reads TGNPFCTT. Residues threonine 166, glutamine 167, tyrosine 172, and aspartate 175 each coordinate ATP.

Belongs to the UMP kinase family. Homohexamer.

Its subcellular location is the cytoplasm. It catalyses the reaction UMP + ATP = UDP + ADP. The protein operates within pyrimidine metabolism; CTP biosynthesis via de novo pathway; UDP from UMP (UMPK route): step 1/1. With respect to regulation, inhibited by UTP. Its function is as follows. Catalyzes the reversible phosphorylation of UMP to UDP. This is Uridylate kinase from Rickettsia felis (strain ATCC VR-1525 / URRWXCal2) (Rickettsia azadi).